The sequence spans 167 residues: Phosphopantetheine adenylyltransferase (167 aa).

Thr-9 is a substrate binding site. ATP-binding positions include 9 to 10 and His-17; that span reads TF. Substrate contacts are provided by Lys-41, Leu-73, and Arg-87. Residues 88-90, Glu-98, and 123-129 contribute to the ATP site; these read GLR and YQFISGT.

It belongs to the bacterial CoaD family. In terms of assembly, homohexamer. The cofactor is Mg(2+).

It localises to the cytoplasm. It catalyses the reaction (R)-4'-phosphopantetheine + ATP + H(+) = 3'-dephospho-CoA + diphosphate. The protein operates within cofactor biosynthesis; coenzyme A biosynthesis; CoA from (R)-pantothenate: step 4/5. Functionally, reversibly transfers an adenylyl group from ATP to 4'-phosphopantetheine, yielding dephospho-CoA (dPCoA) and pyrophosphate. The protein is Phosphopantetheine adenylyltransferase of Ralstonia pickettii (strain 12J).